We begin with the raw amino-acid sequence, 220 residues long: Deoxyribose-phosphate aldolase (220 aa).

The Proton donor/acceptor role is filled by D89. Catalysis depends on K151, which acts as the Schiff-base intermediate with acetaldehyde. K180 functions as the Proton donor/acceptor in the catalytic mechanism.

The protein belongs to the DeoC/FbaB aldolase family. DeoC type 1 subfamily.

It localises to the cytoplasm. It catalyses the reaction 2-deoxy-D-ribose 5-phosphate = D-glyceraldehyde 3-phosphate + acetaldehyde. Its pathway is carbohydrate degradation; 2-deoxy-D-ribose 1-phosphate degradation; D-glyceraldehyde 3-phosphate and acetaldehyde from 2-deoxy-alpha-D-ribose 1-phosphate: step 2/2. In terms of biological role, catalyzes a reversible aldol reaction between acetaldehyde and D-glyceraldehyde 3-phosphate to generate 2-deoxy-D-ribose 5-phosphate. This Bdellovibrio bacteriovorus (strain ATCC 15356 / DSM 50701 / NCIMB 9529 / HD100) protein is Deoxyribose-phosphate aldolase.